The following is a 159-amino-acid chain: Ribosomal RNA large subunit methyltransferase H (159 aa).

Residues L76, G108, and 127 to 132 (FGLLTL) contribute to the S-adenosyl-L-methionine site.

This sequence belongs to the RNA methyltransferase RlmH family. As to quaternary structure, homodimer.

It localises to the cytoplasm. The catalysed reaction is pseudouridine(1915) in 23S rRNA + S-adenosyl-L-methionine = N(3)-methylpseudouridine(1915) in 23S rRNA + S-adenosyl-L-homocysteine + H(+). Functionally, specifically methylates the pseudouridine at position 1915 (m3Psi1915) in 23S rRNA. This is Ribosomal RNA large subunit methyltransferase H from Streptococcus pyogenes serotype M5 (strain Manfredo).